A 218-amino-acid chain; its full sequence is Large ribosomal subunit protein uL3 (218 aa).

This sequence belongs to the universal ribosomal protein uL3 family. As to quaternary structure, part of the 50S ribosomal subunit. Forms a cluster with proteins L14 and L19.

Its function is as follows. One of the primary rRNA binding proteins, it binds directly near the 3'-end of the 23S rRNA, where it nucleates assembly of the 50S subunit. The sequence is that of Large ribosomal subunit protein uL3 from Syntrophus aciditrophicus (strain SB).